A 440-amino-acid polypeptide reads, in one-letter code: GTPase Der (440 aa).

EngA-type G domains lie at 5 to 167 (ATVA…PEQE) and 178 to 353 (IMLS…KEHS). Residues 11-18 (GRPNVGKS), 58-62 (DTGGI), 120-123 (NKSE), 184-191 (GRPNVGKS), 231-235 (DTAGL), and 296-299 (NKWD) contribute to the GTP site. In terms of domain architecture, KH-like spans 354–438 (KRITTADVNR…PIRILERVKQ (85 aa)).

The protein belongs to the TRAFAC class TrmE-Era-EngA-EngB-Septin-like GTPase superfamily. EngA (Der) GTPase family. In terms of assembly, associates with the 50S ribosomal subunit.

GTPase that plays an essential role in the late steps of ribosome biogenesis. This chain is GTPase Der, found in Natranaerobius thermophilus (strain ATCC BAA-1301 / DSM 18059 / JW/NM-WN-LF).